The chain runs to 468 residues: UDP-N-acetylmuramate--L-alanine ligase (468 aa).

An ATP-binding site is contributed by 114 to 120 (GTHGKTT).

The protein belongs to the MurCDEF family.

It localises to the cytoplasm. It catalyses the reaction UDP-N-acetyl-alpha-D-muramate + L-alanine + ATP = UDP-N-acetyl-alpha-D-muramoyl-L-alanine + ADP + phosphate + H(+). It functions in the pathway cell wall biogenesis; peptidoglycan biosynthesis. Its function is as follows. Cell wall formation. The protein is UDP-N-acetylmuramate--L-alanine ligase of Methylocella silvestris (strain DSM 15510 / CIP 108128 / LMG 27833 / NCIMB 13906 / BL2).